The following is a 494-amino-acid chain: Catalase (494 aa).

Residues His-65 and Asn-138 contribute to the active site. Tyr-348 is a heme binding site.

This sequence belongs to the catalase family. In terms of assembly, homotetramer. It depends on heme as a cofactor.

Its subcellular location is the cytoplasm. The protein resides in the cytosol. It is found in the peroxisome matrix. The enzyme catalyses 2 H2O2 = O2 + 2 H2O. In terms of biological role, catalyzes the degradation of hydrogen peroxide (H(2)O(2)) generated by peroxisomal oxidases to water and oxygen, thereby protecting cells from the toxic effects of hydrogen peroxide. This chain is Catalase, found in Pisum sativum (Garden pea).